Consider the following 152-residue polypeptide: Transcriptional regulator MraZ (152 aa).

SpoVT-AbrB domains follow at residues 5 to 52 (ATLV…PLPE) and 81 to 124 (ASEC…DETT).

It belongs to the MraZ family. Forms oligomers.

The protein localises to the cytoplasm. It localises to the nucleoid. Functionally, negatively regulates its own expression and that of the subsequent genes in the proximal part of the division and cell wall (dcw) gene cluster. Acts by binding directly to DNA. May also regulate the expression of genes outside the dcw cluster. The polypeptide is Transcriptional regulator MraZ (Shigella dysenteriae serotype 1 (strain Sd197)).